Here is a 55-residue protein sequence, read N- to C-terminus: MAKGIREKIKLVSSAGTGHFYTTTKNKRTMPEKLEMKKFDPVVRQHVTYKEAKIK.

This sequence belongs to the bacterial ribosomal protein bL33 family.

The chain is Large ribosomal subunit protein bL33 from Proteus mirabilis (strain HI4320).